We begin with the raw amino-acid sequence, 209 residues long: Ribonuclease HII (209 aa).

The 192-residue stretch at 18–209 (GLVAGVDEVG…FKPVKALLER (192 aa)) folds into the RNase H type-2 domain. A divalent metal cation contacts are provided by aspartate 24, glutamate 25, and aspartate 116.

This sequence belongs to the RNase HII family. Requires Mn(2+) as cofactor. It depends on Mg(2+) as a cofactor.

Its subcellular location is the cytoplasm. It catalyses the reaction Endonucleolytic cleavage to 5'-phosphomonoester.. In terms of biological role, endonuclease that specifically degrades the RNA of RNA-DNA hybrids. The protein is Ribonuclease HII of Shewanella sp. (strain ANA-3).